The chain runs to 97 residues: UPF0235 protein Daro_3887 (97 aa).

This sequence belongs to the UPF0235 family.

This is UPF0235 protein Daro_3887 from Dechloromonas aromatica (strain RCB).